The sequence spans 68 residues: Large ribosomal subunit protein uL29 (68 aa).

Belongs to the universal ribosomal protein uL29 family.

The chain is Large ribosomal subunit protein uL29 from Prochlorococcus marinus (strain SARG / CCMP1375 / SS120).